The following is a 119-amino-acid chain: Toxin ICK-11 (119 aa).

The first 19 residues, 1 to 19 (MMKLYSLVIIATLAAAAFA), serve as a signal peptide directing secretion. 4 disulfides stabilise this stretch: Cys-59–Cys-74, Cys-67–Cys-80, Cys-71–Cys-116, and Cys-73–Cys-87.

It belongs to the neurotoxin 25 family. ICK-8 subfamily. Expressed by the venom gland.

The protein resides in the secreted. Its function is as follows. Ion channel inhibitor. In Trittame loki (Brush-footed trapdoor spider), this protein is Toxin ICK-11.